The following is a 491-amino-acid chain: GTPase Der (491 aa).

EngA-type G domains are found at residues 54–217 and 229–402; these read PVLA…PEYS and RRIA…ESWD. GTP contacts are provided by residues 60–67, 107–111, 169–172, 235–242, 282–286, and 347–350; these read GRPNVGKS, DTGGW, NKVD, DTAGI, and NKWD. Positions 403–485 constitute a KH-like domain; the sequence is RRIPTGRLNA…PIEVNMRVRE (83 aa).

Belongs to the TRAFAC class TrmE-Era-EngA-EngB-Septin-like GTPase superfamily. EngA (Der) GTPase family. As to quaternary structure, associates with the 50S ribosomal subunit.

Functionally, GTPase that plays an essential role in the late steps of ribosome biogenesis. The sequence is that of GTPase Der from Paenarthrobacter aurescens (strain TC1).